The chain runs to 1164 residues: Hamartin (1164 aa).

Lysine 30 is covalently cross-linked (Glycyl lysine isopeptide (Lys-Gly) (interchain with G-Cter in ubiquitin)). The mediates interaction with WDR45B stretch occupies residues 403–787 (SDDYVHISLP…QIRQLQHDRE (385 aa)). Positions 439–571 (LNDRGSEEPP…ADESPAGDRE (133 aa)) are disordered. A compositionally biased stretch (basic and acidic residues) spans 474–487 (EKDKEEAAISRELS). Phosphoserine occurs at positions 487, 505, 511, 521, and 598. Positions 513-530 (PGSQRKTHSAASSSQGAS) are enriched in polar residues. The stretch at 721 to 997 (RKVIKAAALE…AAEERLDCCN (277 aa)) forms a coiled coil. A disordered region spans residues 1006–1085 (GHNEEASGHN…TTVGSLPSSK (80 aa)). Positions 1007–1020 (HNEEASGHNGETKT) are enriched in basic and acidic residues. Over residues 1073-1085 (SIPTTVGSLPSSK) the composition is skewed to polar residues. Serine 1100 is modified (phosphoserine). Residues 1131–1164 (IPLNLDGPHPSPPTPDSVGQLHIMDYNETHHEHS) are disordered. Positions 1155–1164 (DYNETHHEHS) are enriched in basic and acidic residues.

Component of the TSC-TBC complex (also named Rhebulator complex), composed of 2 molecules of TSC1, 2 molecules of TSC2 and 1 molecule of TBC1D7. Probably forms a complex composed of chaperones HSP90 and HSP70, co-chaperones STIP1/HOP, CDC37, PPP5C, PTGES3/p23, TSC1 and client protein TSC2. Forms a complex composed of chaperones HSP90 and HSP70, co-chaperones CDC37, PPP5C, TSC1 and client protein TSC2, CDK4, AKT, RAF1 and NR3C1; this complex does not contain co-chaperones STIP1/HOP and PTGES3/p23. Forms a complex containing HSP90AA1, TSC1 and TSC2; TSC1 is required to recruit TCS2 to the complex. Interacts (via C-terminus) with the closed form of HSP90AA1 (via the middle domain and TPR repeat-binding motif). Interacts with DOCK7. Interacts with FBXW5. Interacts with WDR45B. Interacts with RPAP3 and URI1. In terms of processing, phosphorylation at Ser-505 does not affect interaction with TSC2. Post-translationally, 'Lys-63'-linked ubiquitinated at Lys-30 by PELI1; the ubiquitination promotes TSC1/TSC2 complex stability. Highly expressed in skeletal muscle, followed by heart, brain, placenta, pancreas, lung, liver and kidney. Also expressed in embryonic kidney cells.

It is found in the lysosome membrane. The protein localises to the cytoplasm. Its subcellular location is the cytosol. In terms of biological role, non-catalytic component of the TSC-TBC complex, a multiprotein complex that acts as a negative regulator of the canonical mTORC1 complex, an evolutionarily conserved central nutrient sensor that stimulates anabolic reactions and macromolecule biosynthesis to promote cellular biomass generation and growth. The TSC-TBC complex acts as a GTPase-activating protein (GAP) for the small GTPase RHEB, a direct activator of the protein kinase activity of mTORC1. In absence of nutrients, the TSC-TBC complex inhibits mTORC1, thereby preventing phosphorylation of ribosomal protein S6 kinase (RPS6KB1 and RPS6KB2) and EIF4EBP1 (4E-BP1) by the mTORC1 signaling. The TSC-TBC complex is inactivated in response to nutrients, relieving inhibition of mTORC1. Within the TSC-TBC complex, TSC1 stabilizes TSC2 and prevents TSC2 self-aggregation. Acts as a tumor suppressor. Involved in microtubule-mediated protein transport via its ability to regulate mTORC1 signaling. Also acts as a co-chaperone for HSP90AA1 facilitating HSP90AA1 chaperoning of protein clients such as kinases, TSC2 and glucocorticoid receptor NR3C1. Increases ATP binding to HSP90AA1 and inhibits HSP90AA1 ATPase activity. Competes with the activating co-chaperone AHSA1 for binding to HSP90AA1, thereby providing a reciprocal regulatory mechanism for chaperoning of client proteins. Recruits TSC2 to HSP90AA1 and stabilizes TSC2 by preventing the interaction between TSC2 and ubiquitin ligase HERC1. This Homo sapiens (Human) protein is Hamartin.